The sequence spans 319 residues: Protease HtpX homolog (319 aa).

2 consecutive transmembrane segments (helical) span residues 6–26 and 28–48; these read TAML…VIGG and GGMM…YWNS. A Zn(2+)-binding site is contributed by His-130. The active site involves Glu-131. Residue His-134 coordinates Zn(2+). 2 helical membrane passes run 145–165 and 172–192; these read MTAT…FFGG and PLGF…AALV. Glu-201 is a binding site for Zn(2+). A disordered region spans residues 280-319; sequence EMSTGSTAPVRPDNAVRKSRSVPRTGWGRGGSEPPKGPWS.

This sequence belongs to the peptidase M48B family. Requires Zn(2+) as cofactor.

It is found in the cell inner membrane. The sequence is that of Protease HtpX homolog from Sinorhizobium medicae (strain WSM419) (Ensifer medicae).